Reading from the N-terminus, the 366-residue chain is DNA replication and repair protein RecF (366 aa).

30–37 serves as a coordination point for ATP; that stretch reads GDNGMGKT.

This sequence belongs to the RecF family.

The protein localises to the cytoplasm. Functionally, the RecF protein is involved in DNA metabolism; it is required for DNA replication and normal SOS inducibility. RecF binds preferentially to single-stranded, linear DNA. It also seems to bind ATP. The sequence is that of DNA replication and repair protein RecF from Azobacteroides pseudotrichonymphae genomovar. CFP2.